Here is a 267-residue protein sequence, read N- to C-terminus: tRNA pseudouridine synthase A (267 aa).

The active-site Nucleophile is Asp52. Tyr110 contacts substrate.

It belongs to the tRNA pseudouridine synthase TruA family. In terms of assembly, homodimer.

It catalyses the reaction uridine(38/39/40) in tRNA = pseudouridine(38/39/40) in tRNA. Functionally, formation of pseudouridine at positions 38, 39 and 40 in the anticodon stem and loop of transfer RNAs. In Paraburkholderia phymatum (strain DSM 17167 / CIP 108236 / LMG 21445 / STM815) (Burkholderia phymatum), this protein is tRNA pseudouridine synthase A.